A 317-amino-acid chain; its full sequence is E3 ubiquitin-protein ligase NRDP1 (317 aa).

The segment at 18 to 57 (CPICSGVLEEPVQAPHCEHAFCNACITQWFSQQQTCPVDR) adopts an RING-type; degenerate zinc-finger fold. The segment at 78-138 (KLQIACDNAV…LPNHNCIKHL (61 aa)) adopts an SIAH-type; degenerate zinc-finger fold.

In terms of assembly, interacts with USP8, ERBB3, PRKN and BIRC6. Interacts with CSF2RB, EPOR, IL3RA, MYD88 and TBK1. Interacts with CLEC16A. In terms of processing, autoubiquitinated. Autoubiquitination leads to proteasomal degradation. Deubiquitinated by USP8 to get stabilized which induces apoptosis. As to expression, detected in ovary, testis and prostate.

It carries out the reaction S-ubiquitinyl-[E2 ubiquitin-conjugating enzyme]-L-cysteine + [acceptor protein]-L-lysine = [E2 ubiquitin-conjugating enzyme]-L-cysteine + N(6)-ubiquitinyl-[acceptor protein]-L-lysine.. Its pathway is protein modification; protein ubiquitination. Functionally, acts as E3 ubiquitin-protein ligase and regulates the degradation of target proteins. Polyubiquitinates MYD88. Negatively regulates MYD88-dependent production of pro-inflammatory cytokines. Can promote TRIF-dependent production of type I interferon and inhibits infection with vesicular stomatitis virus. Promotes also activation of TBK1 and IRF3. Involved in the ubiquitination of erythropoietin (EPO) and interleukin-3 (IL-3) receptors. Thus, through maintaining basal levels of cytokine receptors, RNF41 is involved in the control of hematopoietic progenitor cell differentiation into myeloerythroid lineages. Contributes to the maintenance of steady-state ERBB3 levels by mediating its growth factor-independent degradation. Involved in the degradation of the inhibitor of apoptosis BIRC6 and thus is an important regulator of cell death by promoting apoptosis. Also acts as a PRKN modifier that accelerates its degradation, resulting in a reduction of PRKN activity, influencing the balance of intracellular redox state. The RNF41-PRKN pathway regulates autophagosome-lysosome fusion during late mitophagy. Mitophagy is a selective form of autophagy necessary for mitochondrial quality control. In Homo sapiens (Human), this protein is E3 ubiquitin-protein ligase NRDP1 (RNF41).